We begin with the raw amino-acid sequence, 341 residues long: HTH-type transcriptional repressor PurR (341 aa).

The 55-residue stretch at 2 to 56 folds into the HTH lacI-type domain; sequence ATIKDVAKHAGVSTTTVSHVINKTRFVAENTKAAVWAAIKELHYSPSAVARSLKV. Residues 4-23 constitute a DNA-binding region (H-T-H motif); it reads IKDVAKHAGVSTTTVSHVIN. A DNA-binding region spans residues 48-56; sequence SAVARSLKV. Hypoxanthine-binding residues include Y73, R190, T192, and D275.

In terms of assembly, homodimer.

It functions in the pathway purine metabolism; purine nucleotide biosynthesis [regulation]. Is the main repressor of the genes involved in the de novo synthesis of purine nucleotides, regulating purB, purC, purEK, purF, purHD, purL, purMN and guaBA expression. PurR is allosterically activated to bind its cognate DNA by binding the purine corepressors, hypoxanthine or guanine, thereby effecting transcription repression. This is HTH-type transcriptional repressor PurR from Yersinia pestis bv. Antiqua (strain Antiqua).